A 159-amino-acid chain; its full sequence is Cyclic pyranopterin monophosphate synthase (159 aa).

Residues 75 to 77 and 113 to 114 contribute to the substrate site; these read LCH and ME. D128 is a catalytic residue.

This sequence belongs to the MoaC family. In terms of assembly, homohexamer; trimer of dimers.

The enzyme catalyses (8S)-3',8-cyclo-7,8-dihydroguanosine 5'-triphosphate = cyclic pyranopterin phosphate + diphosphate. Its pathway is cofactor biosynthesis; molybdopterin biosynthesis. In terms of biological role, catalyzes the conversion of (8S)-3',8-cyclo-7,8-dihydroguanosine 5'-triphosphate to cyclic pyranopterin monophosphate (cPMP). The chain is Cyclic pyranopterin monophosphate synthase from Serratia proteamaculans (strain 568).